A 212-amino-acid chain; its full sequence is MKLYTYYRSTSSYRVRIALALKGLDYQSLPVNLIRDGGEHRQPAYLALNPQGRVPALQVDEGELLIQSPAIIEYLEERYPQPALLSSDPLRRARERGVAALVGCDIHPLHNASVLNLLRQWGHDEEQVRQWIGHWVGQGLAAVEQLIGDQGWCFGDRPGLADVYLVPQLYAAERFGVALDAWPRIRRVADLAAAHPAFRQAHPANQPDTPAA.

The GST N-terminal domain occupies 1–83 (MKLYTYYRST…YLEERYPQPA (83 aa)). The GST C-terminal domain occupies 88–211 (DPLRRARERG…HPANQPDTPA (124 aa)).

This sequence belongs to the GST superfamily. Zeta family.

It catalyses the reaction 4-maleylacetoacetate = 4-fumarylacetoacetate. It participates in amino-acid degradation; L-phenylalanine degradation; acetoacetate and fumarate from L-phenylalanine: step 5/6. This is Maleylacetoacetate isomerase (maiA) from Pseudomonas aeruginosa (strain ATCC 15692 / DSM 22644 / CIP 104116 / JCM 14847 / LMG 12228 / 1C / PRS 101 / PAO1).